The chain runs to 426 residues: D-tagatose-1,6-bisphosphate aldolase subunit KbaZ (426 aa).

It belongs to the GatZ/KbaZ family. KbaZ subfamily. As to quaternary structure, forms a complex with KbaY.

Its pathway is carbohydrate metabolism; D-tagatose 6-phosphate degradation; D-glyceraldehyde 3-phosphate and glycerone phosphate from D-tagatose 6-phosphate: step 2/2. Its function is as follows. Component of the tagatose-1,6-bisphosphate aldolase KbaYZ that is required for full activity and stability of the Y subunit. Could have a chaperone-like function for the proper and stable folding of KbaY. When expressed alone, KbaZ does not show any aldolase activity. In Escherichia coli (strain ATCC 8739 / DSM 1576 / NBRC 3972 / NCIMB 8545 / WDCM 00012 / Crooks), this protein is D-tagatose-1,6-bisphosphate aldolase subunit KbaZ.